Here is a 132-residue protein sequence, read N- to C-terminus: Small ribosomal subunit protein uS8 (132 aa).

The protein belongs to the universal ribosomal protein uS8 family. As to quaternary structure, part of the 30S ribosomal subunit. Contacts proteins S5 and S12.

One of the primary rRNA binding proteins, it binds directly to 16S rRNA central domain where it helps coordinate assembly of the platform of the 30S subunit. The protein is Small ribosomal subunit protein uS8 of Streptococcus pneumoniae (strain Taiwan19F-14).